Here is a 477-residue protein sequence, read N- to C-terminus: Pentatricopeptide repeat-containing protein At1g55630 (477 aa).

PPR repeat units lie at residues 151-185, 186-220, 221-255, 256-290, 291-325, 326-360, 361-395, 396-430, and 431-465; these read TANCYHLLMKIFAECGEYKAMCRLIDEMIKDGYPT, TACTFNLLICTCGEAGLARDVVEQFIKSKTFNYRP, YKHSYNAILHSLLGVKQYKLIDWVYEQMLEDGFTP, DVLTYNIVMFANFRLGKTDRLYRLLDEMVKDGFSP, DLYTYNILLHHLATGNKPLAALNLLNHMREVGVEP, GVIHFTTLIDGLSRAGKLEACKYFMDETVKVGCTP, DVVCYTVMITGYISGGELEKAEEMFKEMTEKGQLP, NVFTYNSMIRGFCMAGKFKEACALLKEMESRGCNP, and NFVVYSTLVNNLKNAGKVLEAHEVVKDMVEKGHYV.

The protein belongs to the PPR family. P subfamily.

This Arabidopsis thaliana (Mouse-ear cress) protein is Pentatricopeptide repeat-containing protein At1g55630.